The primary structure comprises 140 residues: Organic hydroperoxide resistance protein-like (140 aa).

The protein belongs to the OsmC/Ohr family.

The polypeptide is Organic hydroperoxide resistance protein-like (Staphylococcus aureus (strain bovine RF122 / ET3-1)).